Reading from the N-terminus, the 285-residue chain is Inhibitor of growth protein 5 (285 aa).

Positions 116–225 (EKASSTRAKS…ATHPSDVMDM (110 aa)) are disordered. Residues 131 to 149 (KKGRKKTKDSKTTGKKKKS) show a composition bias toward basic residues. Residues 160–178 (NNQSNANSSVNSSSNAGQG) show a composition bias toward low complexity. A PHD-type zinc finger spans residues 232–281 (PTYCLCHQVSYGEMIGCDNPDCPIEWFHFACVGLTTKPKGKWFCPKCTQD). The Zn(2+) site is built by Cys-235, Cys-237, Cys-248, Cys-253, His-259, Cys-262, Cys-275, and Cys-278.

It belongs to the ING family. As to quaternary structure, component of the Enok complex composed of at least Br140, enok, Eaf6 and Ing5.

It is found in the nucleus. The protein resides in the chromosome. Functionally, component of the Enok complex which has a histone H3 acetyltransferase activity. This chain is Inhibitor of growth protein 5, found in Drosophila melanogaster (Fruit fly).